Here is a 239-residue protein sequence, read N- to C-terminus: Secreted effector CFEM9 (239 aa).

Positions 1-18 are cleaved as a signal peptide; sequence MRVLKFLSLMAMLGCTIG. A CFEM domain is found at 19 to 125; the sequence is QSGSATPGSL…DALRRREDEY (107 aa). Cystine bridges form between C43–C82, C47–C77, C57–C63, and C65–C98. Heme is bound at residue D60. Residues 187–199 are compositionally biased toward polar residues; the sequence is KSATTTEATRNTV. The interval 187 to 216 is disordered; it reads KSATTTEATRNTVPASTTAPSPSPQLYTGN. G215 carries the GPI-anchor amidated glycine lipid modification. Residue N216 is glycosylated (N-linked (GlcNAc...) asparagine). Residues 216–239 constitute a propeptide, removed in mature form; the sequence is NASTSRATVSLTVVLTVAAVYLVL.

Belongs to the RBT5 family.

The protein localises to the cell membrane. The protein resides in the secreted. It localises to the host nucleus. Its subcellular location is the host cell membrane. Functionally, appears to function during host infection, and may play a role in suppressing the host immune response. The chain is Secreted effector CFEM9 from Marssonina brunnea f. sp. multigermtubi (strain MB_m1) (Marssonina leaf spot fungus).